Reading from the N-terminus, the 1292-residue chain is Putative late blight resistance protein homolog R1C-3 (1292 aa).

Coiled-coil stretches lie at residues 394 to 414 (DSLA…ESMQ) and 505 to 526 (RMNE…KLLN). Positions 505–792 (RMNEEIVGFE…SESFVKSCEG (288 aa)) constitute an NB-ARC domain. Residue 538–545 (GMPGLGKT) coordinates ATP. LRR repeat units follow at residues 842–865 (AEEN…VYSH), 920–944 (FKFL…LFYL), 963–991 (LWNL…VWDM), 1066–1089 (PIRL…CISA), 1094–1113 (YLEL…TADH), 1114–1142 (LKHL…MFPQ), and 1163–1187 (FPNL…FMDI). An HMA domain is found at 1211-1278 (ETQVEDNQNT…KLRNVAYADE (68 aa)).

Belongs to the disease resistance NB-LRR family.

The protein localises to the cytoplasm. Its subcellular location is the membrane. In terms of biological role, confers resistance to late blight (Phytophthora infestans) races carrying the avirulence gene Avr1. Resistance proteins guard the plant against pathogens that contain an appropriate avirulence protein via an indirect interaction with this avirulence protein. That triggers a defense system including the hypersensitive response, which restricts the pathogen growth. The sequence is that of Putative late blight resistance protein homolog R1C-3 (R1C-3) from Solanum demissum (Wild potato).